Here is a 528-residue protein sequence, read N- to C-terminus: Putative ABC transporter ATP-binding protein MA_1418 (528 aa).

2 ABC transporter domains span residues 2 to 242 (IELR…TNLT) and 262 to 494 (ISVK…SDYK). Residues 36-43 (GHSAAGKT) and 294-301 (GENGSGKT) contribute to the ATP site.

The protein belongs to the ABC transporter superfamily.

It is found in the cell membrane. Its function is as follows. Probably part of an ABC transporter complex. Responsible for energy coupling to the transport system. The protein is Putative ABC transporter ATP-binding protein MA_1418 of Methanosarcina acetivorans (strain ATCC 35395 / DSM 2834 / JCM 12185 / C2A).